Consider the following 214-residue polypeptide: Adenylate kinase (214 aa).

An ATP-binding site is contributed by 10-15 (GAGKGT). An NMP region spans residues 30-59 (STGDMFREEISAKSELGRKVEDILKRGELV). AMP contacts are provided by residues T31, R36, 57–59 (ELV), 85–88 (GYPR), and Q92. The interval 126-163 (NRRICKNCGKIYNLITLPPKINGKCDVCGGELYQREDD) is LID. R127 provides a ligand contact to ATP. Residues C130 and C133 each contribute to the Zn(2+) site. Residue 136 to 137 (IY) coordinates ATP. Zn(2+) contacts are provided by C150 and C153. Positions 160 and 171 each coordinate AMP. Position 199 (M199) interacts with ATP.

It belongs to the adenylate kinase family. As to quaternary structure, monomer.

It is found in the cytoplasm. The enzyme catalyses AMP + ATP = 2 ADP. Its pathway is purine metabolism; AMP biosynthesis via salvage pathway; AMP from ADP: step 1/1. Its function is as follows. Catalyzes the reversible transfer of the terminal phosphate group between ATP and AMP. Plays an important role in cellular energy homeostasis and in adenine nucleotide metabolism. This Thermosipho melanesiensis (strain DSM 12029 / CIP 104789 / BI429) protein is Adenylate kinase.